We begin with the raw amino-acid sequence, 224 residues long: Octanoyltransferase (224 aa).

In terms of domain architecture, BPL/LPL catalytic spans 38–213; that stretch reads AETTDEVWLL…QFVRAAGFQS (176 aa). Substrate-binding positions include 77–84, 144–146, and 157–159; these read RGGQVTYH, SLG, and GLA. The active-site Acyl-thioester intermediate is the Cys-175.

The protein belongs to the LipB family.

Its subcellular location is the cytoplasm. The enzyme catalyses octanoyl-[ACP] + L-lysyl-[protein] = N(6)-octanoyl-L-lysyl-[protein] + holo-[ACP] + H(+). It functions in the pathway protein modification; protein lipoylation via endogenous pathway; protein N(6)-(lipoyl)lysine from octanoyl-[acyl-carrier-protein]: step 1/2. In terms of biological role, catalyzes the transfer of endogenously produced octanoic acid from octanoyl-acyl-carrier-protein onto the lipoyl domains of lipoate-dependent enzymes. Lipoyl-ACP can also act as a substrate although octanoyl-ACP is likely to be the physiological substrate. The sequence is that of Octanoyltransferase from Hahella chejuensis (strain KCTC 2396).